Reading from the N-terminus, the 306-residue chain is Agmatinase (306 aa).

Positions 126, 149, 151, 153, 230, and 232 each coordinate Mn(2+).

It belongs to the arginase family. Agmatinase subfamily. Mn(2+) is required as a cofactor.

The catalysed reaction is agmatine + H2O = urea + putrescine. It functions in the pathway amine and polyamine biosynthesis; putrescine biosynthesis via agmatine pathway; putrescine from agmatine: step 1/1. Its function is as follows. Catalyzes the formation of putrescine from agmatine. This is Agmatinase from Escherichia coli O7:K1 (strain IAI39 / ExPEC).